The sequence spans 380 residues: MSNPSPQVPEEEASTSVCRPKSSMASTSRRQRRERRFRRYLSAGRLVRAQALLQRHPGLDVDAGQPPPLHRACARHDAPALCLLLRLGADPAHQDRHGDTALHAAARQGPDAYTDFFLPLLSRCPSAMGIKNKDGETPGQILGWGPPWDSAEEEEDDASKEREWRQKLQGELEDEWQEVMGRFEGDASHETQEPESFSAWSDRLAREHAQKYQQQQREAEGSCRPPRAEGSSQSWRQQEEEQRLFRERARAKEEELRESRARRAQEALGDREPKPTRAGPREEHPRGAGRGSLWRFGDVPWPCPGGGDPEAMAAALVARGPPLEEQGALRRYLRVQQVRWHPDRFLQRFRSQIETWELGRVMGAVTALSQALNRHAEALK.

Residues 1-34 (MSNPSPQVPEEEASTSVCRPKSSMASTSRRQRRE) are disordered. 2 ANK repeats span residues 64-93 (GQPP…DPAH) and 97-133 (HGDT…IKNK). Disordered regions lie at residues 131 to 166 (KNKD…EWRQ) and 185 to 293 (GDAS…RGSL). S150 bears the Phosphoserine mark. Residues 237 to 286 (QQEEEQRLFRERARAKEEELRESRARRAQEALGDREPKPTRAGPREEHPR) are compositionally biased toward basic and acidic residues.

As to quaternary structure, interacts with CACTIN (via N-terminal domain); the interaction occurs in a pro-inflammatory-independent manner.

It localises to the nucleus. Its function is as follows. Involved in the regulation of innate immune response. Acts as negative regulator of Toll-like receptor and interferon-regulatory factor (IRF) signaling pathways. Contributes to the negative regulation of transcriptional activation of NF-kappa-B target genes in response to endogenous pro-inflammatory stimuli. The chain is NF-kappa-B inhibitor-like protein 1 (NFKBIL1) from Pan troglodytes (Chimpanzee).